A 360-amino-acid polypeptide reads, in one-letter code: Photosystem II protein D1 (360 aa).

A run of 3 helical transmembrane segments spans residues 30–47, 119–134, and 143–157; these read YVGW…TAAA, HFLI…QWEL, and WICV…AAFA. His-119 lines the chlorophyll a pocket. Tyr-127 contacts pheophytin a. The [CaMn4O5] cluster site is built by Asp-171 and Glu-190. Residues 198-219 traverse the membrane as a helical segment; it reads FHMAGVAGMFGGSLFSAMHGSL. His-199 lines the chlorophyll a pocket. A quinone contacts are provided by residues His-216 and 265-266; that span reads SF. His-216 provides a ligand contact to Fe cation. His-273 provides a ligand contact to Fe cation. A helical membrane pass occupies residues 275 to 289; sequence FLAVFPVVCVWLTSM. [CaMn4O5] cluster contacts are provided by His-333, Glu-334, Asp-343, and Ala-345. Residues 346-360 constitute a propeptide that is removed on maturation; that stretch reads AAESTTVALSAPAIG.

It belongs to the reaction center PufL/M/PsbA/D family. PSII is composed of 1 copy each of membrane proteins PsbA, PsbB, PsbC, PsbD, PsbE, PsbF, PsbH, PsbI, PsbJ, PsbK, PsbL, PsbM, PsbT, PsbX, PsbY, Psb30/Ycf12, peripheral proteins PsbO, CyanoQ (PsbQ), PsbU, PsbV and a large number of cofactors. It forms dimeric complexes. The cofactor is The D1/D2 heterodimer binds P680, chlorophylls that are the primary electron donor of PSII, and subsequent electron acceptors. It shares a non-heme iron and each subunit binds pheophytin, quinone, additional chlorophylls, carotenoids and lipids. D1 provides most of the ligands for the Mn4-Ca-O5 cluster of the oxygen-evolving complex (OEC). There is also a Cl(-1) ion associated with D1 and D2, which is required for oxygen evolution. The PSII complex binds additional chlorophylls, carotenoids and specific lipids.. Tyr-162 forms a radical intermediate that is referred to as redox-active TyrZ, YZ or Y-Z. In terms of processing, C-terminally processed by CtpA; processing is essential to allow assembly of the oxygen-evolving complex and thus photosynthetic growth.

It localises to the cellular thylakoid membrane. It carries out the reaction 2 a plastoquinone + 4 hnu + 2 H2O = 2 a plastoquinol + O2. Functionally, photosystem II (PSII) is a light-driven water:plastoquinone oxidoreductase that uses light energy to abstract electrons from H(2)O, generating O(2) and a proton gradient subsequently used for ATP formation. It consists of a core antenna complex that captures photons, and an electron transfer chain that converts photonic excitation into a charge separation. The D1/D2 (PsbA/PsbD) reaction center heterodimer binds P680, the primary electron donor of PSII as well as several subsequent electron acceptors. The sequence is that of Photosystem II protein D1 from Prochlorococcus marinus (strain MIT 9301).